We begin with the raw amino-acid sequence, 804 residues long: Phenylalanine--tRNA ligase beta subunit (804 aa).

In terms of domain architecture, tRNA-binding spans 40-155; sequence GEGIKGVVIG…NDAETGSDAL (116 aa). The region spanning 409 to 484 is the B5 domain; the sequence is IEANNIHVSA…RLYGYDNIPS (76 aa). Mg(2+) contacts are provided by aspartate 462, aspartate 468, glutamate 471, and glutamate 472. The FDX-ACB domain maps to 710 to 803; that stretch reads PKYPSVTRDI…LEDTYQAVLR (94 aa).

Belongs to the phenylalanyl-tRNA synthetase beta subunit family. Type 1 subfamily. In terms of assembly, tetramer of two alpha and two beta subunits. Mg(2+) is required as a cofactor.

It localises to the cytoplasm. It catalyses the reaction tRNA(Phe) + L-phenylalanine + ATP = L-phenylalanyl-tRNA(Phe) + AMP + diphosphate + H(+). In Bacillus subtilis (strain 168), this protein is Phenylalanine--tRNA ligase beta subunit (pheT).